The chain runs to 182 residues: Orotate phosphoribosyltransferase (182 aa).

5-phospho-alpha-D-ribose 1-diphosphate contacts are provided by residues Arg-96, Lys-97, Lys-100, His-102, and 122 to 130 (EDTSTTGGS). Residues Thr-126 and Arg-154 each contribute to the orotate site.

This sequence belongs to the purine/pyrimidine phosphoribosyltransferase family. PyrE subfamily. In terms of assembly, homodimer. It depends on Mg(2+) as a cofactor.

The catalysed reaction is orotidine 5'-phosphate + diphosphate = orotate + 5-phospho-alpha-D-ribose 1-diphosphate. Its pathway is pyrimidine metabolism; UMP biosynthesis via de novo pathway; UMP from orotate: step 1/2. In terms of biological role, catalyzes the transfer of a ribosyl phosphate group from 5-phosphoribose 1-diphosphate to orotate, leading to the formation of orotidine monophosphate (OMP). This is Orotate phosphoribosyltransferase from Streptomyces avermitilis (strain ATCC 31267 / DSM 46492 / JCM 5070 / NBRC 14893 / NCIMB 12804 / NRRL 8165 / MA-4680).